Reading from the N-terminus, the 1218-residue chain is NACHT, LRR and PYD domains-containing protein 1a allele 4 (1218 aa).

Over residues 1–29 the composition is skewed to polar residues; it reads MGESQSKQESNTRVAQHGSQQDVDPTFQT. Disordered regions lie at residues 1-44 and 71-91; these read MGES…QVEQ and EMDH…DRSE. Residues 77 to 87 show a composition bias toward basic residues; the sequence is RRHSHQSKKKL. The NACHT domain maps to 175 to 484; it reads QLVIIEGAAG…EFFAAMSYIL (310 aa). 181–188 is an ATP binding site; sequence GAAGIGKS. LRR repeat units lie at residues 343 to 364, 673 to 693, and 730 to 750; these read KERN…LTLC, NLEE…RSLC, and RLAE…RQLC. The span at 799-815 shows a compositional bias: polar residues; the sequence is TMPTENTDGEESLTSSK. The disordered stretch occupies residues 799 to 842; the sequence is TMPTENTDGEESLTSSKQQQQQSGDKHMEPLGTDDDFWGPSGPV. A ZU5 region spans residues 835 to 968; the sequence is FWGPSGPVST…HFAVLENPSF (134 aa). One can recognise an FIIND domain in the interval 835–1118; that stretch reads FWGPSGPVST…LRPALPRMAS (284 aa). Positions 969 to 1118 are UPA; it reads SPMGVLLRMI…LRPALPRMAS (150 aa). Residues 1122-1211 form the CARD domain; that stretch reads DAPALLHFVD…HLIMDLLEKS (90 aa).

Belongs to the NLRP family. Interacts (via LRR repeats) with BCL2 and BCL2L1 (via the loop between motifs BH4 and BH3). Interacts with NOD2; this interaction is enhanced in the presence of muramyl dipeptide (MDP) and increases IL1B release. Interacts with EIF2AK2/PKR; this interaction requires EIF2AK2 activity, is accompanied by EIF2AK2 autophosphorylation and promotes inflammasome assembly in response to danger-associated signals. Interacts with MEFV; this interaction targets Nlrp1a to degradation by autophagy, hence preventing excessive IL1B- and IL18-mediated inflammation. Interacts with DPP9; leading to inhibit activation of the inflammasome. DPP9 acts via formation of a ternary complex, composed of a DPP9 homodimer, one full-length NLRP1 protein, and one cleaved C-terminus of Nlrp1a (NACHT, LRR and PYD domains-containing protein 1a, C-terminus). Interacts with DPP8; leading to inhibit activation of the inflammasome, probably via formation of a ternary complex with DPP8. As to quaternary structure, interacts with the C-terminal part of Nlrp1a (NACHT, LRR and PYD domains-containing protein 1a, C-terminus) in absence of pathogens and other damage-associated signals. In terms of assembly, interacts with the N-terminal part of Nlrp1a (NACHT, LRR and PYD domains-containing protein 1a, N-terminus) in absence of pathogens and other damage-associated signals. Homomultimer; forms the Nlrp1a inflammasome polymeric complex, a filament composed of homopolymers of this form in response to pathogens and other damage-associated signals. The Nlrp1a inflammasome polymeric complex directly recruits pro-caspase-1 (proCASP1) independently of PYCARD/ASC. Interacts (via CARD domain) with CASP1 (via CARD domain); leading to CASP1 activation. Post-translationally, autocatalytically cleaved. Autocatalytic cleavage in FIIND region occurs constitutively, prior to activation signals, and is required for inflammasome activity (IL1B release), possibly by facilitating CASP1 binding. Both N- and C-terminal parts remain associated non-covalently. Ubiquitinated in response to pathogen-associated signals, leading to its degradation by the proteasome and subsequent release of the cleaved C-terminal part of the protein (NACHT, LRR and PYD domains-containing protein 1a, C-terminus), which polymerizes and forms the Nlrp1a inflammasome.

The protein resides in the cytoplasm. Its subcellular location is the cytosol. It is found in the nucleus. The protein localises to the inflammasome. Its activity is regulated as follows. Activated by pathogens and other damage-associated signals: activation promotes ubiquitination and degradation of the N-terminal part, releasing the cleaved C-terminal part of the protein (NACHT, LRR and PYD domains-containing protein 1a, C-terminus), which polymerizes and forms the Nlrp1a inflammasome. Nlrp1a inflammasome is inhibited by DPP8 and DPP9, which sequester the C-terminal fragment of Nlrp1a (NACHT, LRR and PYD domains-containing protein 1a, C-terminus) in a ternary complex, thereby preventing Nlrp1a oligomerization and activation. Nlrp1a inflammasome is strongly activated by Val-boroPro (Talabostat, PT-100), an inhibitor of dipeptidyl peptidases DPP8 and DPP9. Val-boroPro relieves inhibition of DPP8 and/or DPP9 by promoting disruption of the ternary complex, releasing its C-terminal part from autoinhibition. Not activated by cleavage by B.anthracis lethal toxin (LT) endopeptidase. Acts as the sensor component of the Nlrp1a inflammasome, which mediates inflammasome activation in response to various pathogen-associated signals, leading to subsequent pyroptosis. Inflammasomes are supramolecular complexes that assemble in the cytosol in response to pathogens and other damage-associated signals and play critical roles in innate immunity and inflammation. Acts as a recognition receptor (PRR): recognizes specific pathogens and other damage-associated signals, such as Val-boroPro inhibitor, and mediates the formation of the inflammasome polymeric complex. In response to pathogen-associated signals, the N-terminal part of Nlrp1a is degraded by the proteasome, releasing the cleaved C-terminal part of the protein (NACHT, LRR and PYD domains-containing protein 1a, C-terminus), which polymerizes to initiate the formation of the inflammasome complex: the inflammasome directly recruits pro-caspase-1 (proCASP1) independently of PYCARD/ASC and promotes caspase-1 (CASP1) activation, which subsequently cleaves and activates inflammatory cytokines IL1B and IL18 and gasdermin-D (GSDMD), leading to pyroptosis. In the absence of GSDMD expression, the Nlrp1a inflammasome is able to recruit and activate CASP8, leading to activation of gasdermin-E (GSDME). Its function is as follows. Constitutes the precursor of the Nlrp1a inflammasome, which mediates autoproteolytic processing within the FIIND domain to generate the N-terminal and C-terminal parts, which are associated non-covalently in absence of pathogens and other damage-associated signals. Functionally, regulatory part that prevents formation of the Nlrp1a inflammasome: in absence of pathogens and other damage-associated signals, interacts with the C-terminal part of Nlrp1a (NACHT, LRR and PYD domains-containing protein 1a, C-terminus), preventing activation of the Nlrp1a inflammasome. In response to pathogen-associated signals, this part is ubiquitinated by the N-end rule pathway and degraded by the proteasome, releasing the cleaved C-terminal part of the protein, which polymerizes and forms the Nlrp1a inflammasome. In terms of biological role, constitutes the active part of the Nlrp1a inflammasome. In absence of pathogens and other damage-associated signals, interacts with the N-terminal part of Nlrp1a (NACHT, LRR and PYD domains-containing protein 1a, N-terminus), preventing activation of the Nlrp1a inflammasome. In response to pathogen-associated signals, the N-terminal part of Nlrp1a is degraded by the proteasome, releasing this form, which polymerizes to form the Nlrp1a inflammasome complex: the Nlrp1a inflammasome complex then directly recruits pro-caspase-1 (proCASP1) and promotes caspase-1 (CASP1) activation, leading to gasdermin-D (GSDMD) cleavage and subsequent pyroptosis. The chain is NACHT, LRR and PYD domains-containing protein 1a allele 4 from Rattus norvegicus (Rat).